Consider the following 368-residue polypeptide: Quinolinate synthase (368 aa).

Residues histidine 46 and serine 63 each coordinate iminosuccinate. Cysteine 110 serves as a coordination point for [4Fe-4S] cluster. Residues tyrosine 141 to asparagine 143 and serine 162 each bind iminosuccinate. Residue cysteine 230 coordinates [4Fe-4S] cluster. Iminosuccinate is bound by residues histidine 256 to glutamate 258 and threonine 273. Cysteine 320 serves as a coordination point for [4Fe-4S] cluster.

This sequence belongs to the quinolinate synthase family. Type 3 subfamily. [4Fe-4S] cluster is required as a cofactor.

Its subcellular location is the cytoplasm. It catalyses the reaction iminosuccinate + dihydroxyacetone phosphate = quinolinate + phosphate + 2 H2O + H(+). It functions in the pathway cofactor biosynthesis; NAD(+) biosynthesis; quinolinate from iminoaspartate: step 1/1. Its function is as follows. Catalyzes the condensation of iminoaspartate with dihydroxyacetone phosphate to form quinolinate. The chain is Quinolinate synthase from Bacillus cereus (strain Q1).